Reading from the N-terminus, the 543-residue chain is T-complex protein 1 subunit eta (543 aa).

M1 carries the N-acetylmethionine modification. Position 41 (G41) interacts with ADP. ATP is bound at residue G41. An N6-acetyllysine modification is found at K67. D92 serves as a coordination point for Mg(2+). The ADP site is built by G93, T94, T95, S96, S164, and S165. G93 contributes to the ATP binding site. ATP is bound at residue S96. N6-acetyllysine occurs at positions 250 and 320. 2 residues coordinate ATP: R398 and G409. G409 is a binding site for ADP. K430 participates in a covalent cross-link: Glycyl lysine isopeptide (Lys-Gly) (interchain with G-Cter in SUMO2). E494 and R499 together coordinate ADP. An ATP-binding site is contributed by R499. The residue at position 535 (R535) is an Omega-N-methylarginine.

This sequence belongs to the TCP-1 chaperonin family. Component of the chaperonin-containing T-complex (TRiC), a hexadecamer composed of two identical back-to-back stacked rings enclosing a protein folding chamber. Each ring is made up of eight different subunits: TCP1/CCT1, CCT2, CCT3, CCT4, CCT5, CCT6A/CCT6, CCT7, CCT8. Interacts with PACRG. Interacts with DLEC1.

It localises to the cytoplasm. It catalyses the reaction ATP + H2O = ADP + phosphate + H(+). Functionally, component of the chaperonin-containing T-complex (TRiC), a molecular chaperone complex that assists the folding of actin, tubulin and other proteins upon ATP hydrolysis. The TRiC complex mediates the folding of WRAP53/TCAB1, thereby regulating telomere maintenance. In Pongo abelii (Sumatran orangutan), this protein is T-complex protein 1 subunit eta (CCT7).